The chain runs to 579 residues: Fatty-acid amide hydrolase 1 (579 aa).

Residues 9 to 29 (ALSGLSGVCLACSLLSAAVVL) form a helical membrane-spanning segment. Over 30–403 (RWTRSQTARG…GDFVDPCLGD (374 aa)) the chain is Cytoplasmic. Lysine 142 functions as the Charge relay system in the catalytic mechanism. Substrate-binding positions include methionine 191, serine 217, and 238-241 (IGGS). The active-site Charge relay system is serine 217. Residue serine 241 is the Acyl-ester intermediate of the active site. Serine 241 carries the phosphoserine modification. Residues 404–433 (LVLVLKLPRWFKKLLSFLLKPLFPRLAAFL) lie within the membrane without spanning it. The Cytoplasmic segment spans residues 434–579 (NSMCPRSAEK…RLMTPEKRPS (146 aa)).

It belongs to the amidase family. In terms of assembly, homodimer.

It is found in the endoplasmic reticulum membrane. The protein resides in the golgi apparatus membrane. The enzyme catalyses N-(5Z,8Z,11Z,14Z-eicosatetraenoyl)-ethanolamine + H2O = ethanolamine + (5Z,8Z,11Z,14Z)-eicosatetraenoate. The catalysed reaction is (9Z)-octadecenamide + H2O = (9Z)-octadecenoate + NH4(+). It carries out the reaction 2-(5Z,8Z,11Z,14Z-eicosatetraenoyl)-glycerol + H2O = glycerol + (5Z,8Z,11Z,14Z)-eicosatetraenoate + H(+). It catalyses the reaction N-(9Z-hexadecenoyl) ethanolamine + H2O = (9Z)-hexadecenoate + ethanolamine. The enzyme catalyses N-(9Z-octadecenoyl) ethanolamine + H2O = ethanolamine + (9Z)-octadecenoate. The catalysed reaction is N-octadecanoyl ethanolamine + H2O = octadecanoate + ethanolamine. It carries out the reaction N-docosanoyl-ethanolamine + H2O = docosanoate + ethanolamine. It catalyses the reaction N-tetracosanoyl-taurine + H2O = tetracosanoate + taurine. The enzyme catalyses N-(15Z-tetracosenoyl)-ethanolamine + H2O = (15Z)-tetracosenoate + ethanolamine. The catalysed reaction is N-(9Z-octadecenoyl)-taurine + H2O = taurine + (9Z)-octadecenoate. It carries out the reaction N-docosanoyl-taurine + H2O = docosanoate + taurine. It catalyses the reaction N-(15Z-tetracosenoyl)-taurine + H2O = (15Z)-tetracosenoate + taurine. The enzyme catalyses N-tricosanoyl-taurine + H2O = tricosanoate + taurine. The catalysed reaction is (9Z,12Z,15Z)-octadecatrienamide + H2O = (9Z,12Z,15Z)-octadecatrienoate + NH4(+). It carries out the reaction (5Z,8Z,11Z,14Z)-eicosatetraenamide + H2O = (5Z,8Z,11Z,14Z)-eicosatetraenoate + NH4(+). It catalyses the reaction (6Z)-octadecenamide + H2O = (6Z)-octadecenoate + NH4(+). The enzyme catalyses (15Z)-tetracosenamide + H2O = (15Z)-tetracosenoate + NH4(+). The catalysed reaction is (8Z,11Z,14Z)-eicosatrienamide + H2O = (8Z,11Z,14Z)-eicosatrienoate + NH4(+). It carries out the reaction (11Z,14Z,17Z)-eicosatrienamide + H2O = (11Z,14Z,17Z)-eicosatrienoate + NH4(+). It catalyses the reaction (11Z,14Z)-eicosadienamide + H2O = (11Z,14Z)-eicosadienoate + NH4(+). The enzyme catalyses (9Z,12Z)-octadecadienamide + H2O = (9Z,12Z)-octadecadienoate + NH4(+). The catalysed reaction is tetradecamide + H2O = tetradecanoate + NH4(+). It carries out the reaction 1-O-methyl-(5Z,8Z,11Z,14Z)-eicosatetraenoate + H2O = methanol + (5Z,8Z,11Z,14Z)-eicosatetraenoate + H(+). It catalyses the reaction (11Z)-eicosenamide + H2O = (11Z)-eicosenoate + NH4(+). The enzyme catalyses (9Z)-octadecenoate + glycine = N-(9Z-octadecenoyl)glycine + H2O. The catalysed reaction is N-(5Z,8Z,11Z,14Z)-eicosatetraenoyl-glycine + H2O = (5Z,8Z,11Z,14Z)-eicosatetraenoate + glycine. It carries out the reaction N-(5Z,8Z,11Z,14Z-eicosatetraenoyl)-L-serine + H2O = (5Z,8Z,11Z,14Z)-eicosatetraenoate + L-serine. Its activity is regulated as follows. Inhibited the trifluoromethyl compound PF-3845. Catalyzes the hydrolysis of endogenous amidated lipids like the endocannabinoid anandamide (N-(5Z,8Z,11Z,14Z-eicosatetraenoyl)-ethanolamine), as well as other fatty amides such as the taurine-conjugated fatty acids (a structural class of central nervous system (CNS) metabolites), to their corresponding fatty acids, thereby regulating the signaling functions of these molecules. FAAH cooperates with PM20D1 in the hydrolysis of amino acid-conjugated fatty acids such as N-fatty acyl glycine and N-fatty acyl-L-serine, thereby acting as a physiological regulator of specific subsets of intracellular, but not of extracellular, N-fatty acyl amino acids. It can also catalyze the hydrolysis of the endocannabinoid 2-arachidonoylglycerol (2-(5Z,8Z,11Z,14Z-eicosatetraenoyl)-glycerol). The protein is Fatty-acid amide hydrolase 1 (Faah) of Mus musculus (Mouse).